The chain runs to 559 residues: Potassium-transporting ATPase potassium-binding subunit (559 aa).

13 helical membrane passes run 5-25, 27-47, 63-83, 132-152, 170-190, 253-273, 283-303, 327-347, 356-376, 379-399, 416-436, 484-504, and 524-544; these read GFLL…PLGS, LARL…RILW, LLAL…LLFW, GLTV…FALI, LVRI…LFFI, LAQM…FGEA, LLWA…WAEV, FGVL…CGAV, ALGG…FGGV, GLYG…LMIG, MTAL…ALAM, LLAF…MAIA, and GALF…LTFI.

It belongs to the KdpA family. As to quaternary structure, the system is composed of three essential subunits: KdpA, KdpB and KdpC.

Its subcellular location is the cell inner membrane. Functionally, part of the high-affinity ATP-driven potassium transport (or Kdp) system, which catalyzes the hydrolysis of ATP coupled with the electrogenic transport of potassium into the cytoplasm. This subunit binds the periplasmic potassium ions and delivers the ions to the membrane domain of KdpB through an intramembrane tunnel. This Salmonella dublin (strain CT_02021853) protein is Potassium-transporting ATPase potassium-binding subunit.